The sequence spans 511 residues: Cytochrome P450 monooxygenase prhD (511 aa).

Asn-7 carries N-linked (GlcNAc...) asparagine glycosylation. Residues 10–30 form a helical membrane-spanning segment; it reads GNGMGLLIPLGLSWLIWTILL. Residue Cys-444 coordinates heme. Asn-502 carries N-linked (GlcNAc...) asparagine glycosylation.

Belongs to the cytochrome P450 family. Heme serves as cofactor.

It localises to the membrane. It functions in the pathway secondary metabolite biosynthesis; terpenoid biosynthesis. Its function is as follows. Cytochrome P450 monooxygenase; part of the gene cluster that mediates the biosynthesis of paraherquonin, a meroterpenoid with a unique, highly congested hexacyclic molecular architecture. The first step of the pathway is the synthesis of 3,5-dimethylorsellinic acid (DMOA) by the polyketide synthase prhL. Synthesis of DMOA is followed by farnesylation by the prenyltransferase prhE, methylesterification by the methyl-transferase prhM, epoxidation of the prenyl chain by the flavin-dependent monooxygenase prhF, and cyclization of the farnesyl moiety by the terpene cyclase prhH, to yield the tetracyclic intermediate, protoaustinoid A. The short chain dehydrogenase prhI then oxidizes the C-3 alcohol group of the terpene cyclase product to transform protoaustinoid A into protoaustinoid B. The FAD-binding monooxygenase prhJ catalyzes the oxidation of protoaustinoid B into preaustinoid A which is further oxidized into preaustinoid A1 by FAD-binding monooxygenase phrK. Finally, prhA leads to berkeleydione via the berkeleyone B intermediate. PrhA is a multifunctional dioxygenase that first desaturates at C5-C6 to form berkeleyone B, followed by rearrangement of the A/B-ring to form the cycloheptadiene moiety in berkeleydione. Berkeleydione serves as the key intermediate for the biosynthesis of paraherquonin as well as many other meroterpenoids. The cytochrome P450 monooxygenases prhB, prhD, and prhN, as well as the isomerase prhC, are probably involved in the late stage of paraherquonin biosynthesis, after the production of berkeleydione. Especially prhC might be a multifunctional enzyme that catalyzes the D-ring expansion via intramolecular methoxy rearrangement, as well as the hydrolysis of the expanded D-ring. This is Cytochrome P450 monooxygenase prhD from Penicillium brasilianum.